The chain runs to 268 residues: 1D-myo-inositol 2-acetamido-2-deoxy-alpha-D-glucopyranoside deacetylase (268 aa).

3 residues coordinate Zn(2+): histidine 7, aspartate 10, and histidine 142.

The protein belongs to the MshB deacetylase family. Zn(2+) is required as a cofactor.

It carries out the reaction 1D-myo-inositol 2-acetamido-2-deoxy-alpha-D-glucopyranoside + H2O = 1D-myo-inositol 2-amino-2-deoxy-alpha-D-glucopyranoside + acetate. Catalyzes the deacetylation of 1D-myo-inositol 2-acetamido-2-deoxy-alpha-D-glucopyranoside (GlcNAc-Ins) in the mycothiol biosynthesis pathway. The chain is 1D-myo-inositol 2-acetamido-2-deoxy-alpha-D-glucopyranoside deacetylase from Saccharomonospora viridis (strain ATCC 15386 / DSM 43017 / JCM 3036 / CCUG 5913 / NBRC 12207 / NCIMB 9602 / P101) (Thermoactinomyces viridis).